The following is a 144-amino-acid chain: uncharacterized protein (144 aa).

The N-terminal stretch at 1 to 22 is a signal peptide; that stretch reads MCTDVAFFSLDCLATWLGGVCS.

This is an uncharacterized protein from Saccharomyces cerevisiae (strain ATCC 204508 / S288c) (Baker's yeast).